The primary structure comprises 278 residues: Large ribosomal subunit protein uL2 (278 aa).

A disordered region spans residues 223–278 (GVAMNPIDHPHGGGEGRTSGGRHPVTPWGFPTKGKKTRSNKRTDTFIVSSRHNRKK).

This sequence belongs to the universal ribosomal protein uL2 family. As to quaternary structure, part of the 50S ribosomal subunit. Forms a bridge to the 30S subunit in the 70S ribosome.

Its function is as follows. One of the primary rRNA binding proteins. Required for association of the 30S and 50S subunits to form the 70S ribosome, for tRNA binding and peptide bond formation. It has been suggested to have peptidyltransferase activity; this is somewhat controversial. Makes several contacts with the 16S rRNA in the 70S ribosome. This chain is Large ribosomal subunit protein uL2, found in Methylobacterium sp. (strain 4-46).